A 461-amino-acid chain; its full sequence is Gram-negative bacteria-binding protein 2 (461 aa).

The signal sequence occupies residues 1–20 (MRWEFLPCLLLLISNNKIFG). One can recognise a CBM39 domain in the interval 21–115 (FKVPSINFEM…TRVIINTRLL (95 aa)). N-linked (GlcNAc...) asparagine glycans are attached at residues Asn71, Asn170, Asn177, and Asn364. Residues 179–461 (TTWKHDIRQR…VIDYVRVYAE (283 aa)) enclose the GH16 domain.

It belongs to the insect beta-1,3-glucan binding protein family.

The protein localises to the secreted. Its function is as follows. Involved in the recognition of invading microorganisms. Binds specifically to beta-1,3-glucan and activates the phenoloxidase cascade. In Drosophila melanogaster (Fruit fly), this protein is Gram-negative bacteria-binding protein 2.